The sequence spans 549 residues: MKRVLTALAATLPFAANAADAISGAVERQPTNWQAIIMFLIFVVFTLGITYWASKRVRSRSDYYTAGGNITGFQNGLAIAGDYMSAASFLGISALVFTSGYDGLIYSLGFLVGWPIILFLIAERLRNLGRYTSADVASYRLKQGPIRILSACGSLVVVALYLIAQMVGAGKLIELLFGLNYHIAVVLVGVLMMMYVLFGGMLATTWVQIIKAVLLLFGASFMAFMVMKHVGFSFNNLFSEAMAVHPKGVDIMKPGGLVKDPISALSLGLGLMFGTAGLPHILMRFFTVSDAREARKSVFYATGFMGYFYILTFIIGFGAIMLVGANPEYKDAAGHLIGGNNMAAVHLANAVGGNLFLGFISAVAFATILAVVADLTLAGASAVSHDLYANVFKKGATEREELRVSKITVLILGVIAIILGVLFENQNIAFMVGLAFAIAASCNFPIILLSMYWSKLTTRGAMLGGWLGLITAVVLMILGPTIWVQILGHEKAIFPYEYPALFSISVAFLGIWFFSATDNSAEGARERELFRAQFIRSQTGFGVEQGRAH.

The Periplasmic portion of the chain corresponds to 1–32 (MKRVLTALAATLPFAANAADAISGAVERQPTN). Residues 33–55 (WQAIIMFLIFVVFTLGITYWASK) traverse the membrane as a helical segment. The Cytoplasmic portion of the chain corresponds to 56 to 75 (RVRSRSDYYTAGGNITGFQN). A helical membrane pass occupies residues 76 to 98 (GLAIAGDYMSAASFLGISALVFT). Over 99-102 (SGYD) the chain is Periplasmic. A helical transmembrane segment spans residues 103-125 (GLIYSLGFLVGWPIILFLIAERL). Over 126 to 145 (RNLGRYTSADVASYRLKQGP) the chain is Cytoplasmic. A helical membrane pass occupies residues 146 to 168 (IRILSACGSLVVVALYLIAQMVG). The Periplasmic segment spans residues 169-182 (AGKLIELLFGLNYH). A helical membrane pass occupies residues 183–205 (IAVVLVGVLMMMYVLFGGMLATT). Over 206–211 (WVQIIK) the chain is Cytoplasmic. The helical transmembrane segment at 212-234 (AVLLLFGASFMAFMVMKHVGFSF) threads the bilayer. The Periplasmic segment spans residues 235 to 260 (NNLFSEAMAVHPKGVDIMKPGGLVKD). Residues 261–283 (PISALSLGLGLMFGTAGLPHILM) form a helical membrane-spanning segment. Residues 284 to 302 (RFFTVSDAREARKSVFYAT) lie on the Cytoplasmic side of the membrane. Residues 303-325 (GFMGYFYILTFIIGFGAIMLVGA) traverse the membrane as a helical segment. The Periplasmic segment spans residues 326 to 349 (NPEYKDAAGHLIGGNNMAAVHLAN). The chain crosses the membrane as a helical span at residues 350–372 (AVGGNLFLGFISAVAFATILAVV). At 373 to 401 (ADLTLAGASAVSHDLYANVFKKGATEREE) the chain is on the cytoplasmic side. Residues 402-424 (LRVSKITVLILGVIAIILGVLFE) traverse the membrane as a helical segment. Topologically, residues 425-427 (NQN) are periplasmic. A helical transmembrane segment spans residues 428 to 450 (IAFMVGLAFAIAASCNFPIILLS). The Cytoplasmic portion of the chain corresponds to 451–461 (MYWSKLTTRGA). Residues 462–484 (MLGGWLGLITAVVLMILGPTIWV) form a helical membrane-spanning segment. Topologically, residues 485-493 (QILGHEKAI) are periplasmic. A helical transmembrane segment spans residues 494–516 (FPYEYPALFSISVAFLGIWFFSA). Residues 517-549 (TDNSAEGARERELFRAQFIRSQTGFGVEQGRAH) are Cytoplasmic-facing.

Belongs to the sodium:solute symporter (SSF) (TC 2.A.21) family.

It localises to the cell inner membrane. Its function is as follows. Transports acetate. This is Cation/acetate symporter ActP (actP) from Shigella flexneri.